Consider the following 480-residue polypeptide: Aspartyl/glutamyl-tRNA(Asn/Gln) amidotransferase subunit B (480 aa).

This sequence belongs to the GatB/GatE family. GatB subfamily. As to quaternary structure, heterotrimer of A, B and C subunits.

It catalyses the reaction L-glutamyl-tRNA(Gln) + L-glutamine + ATP + H2O = L-glutaminyl-tRNA(Gln) + L-glutamate + ADP + phosphate + H(+). It carries out the reaction L-aspartyl-tRNA(Asn) + L-glutamine + ATP + H2O = L-asparaginyl-tRNA(Asn) + L-glutamate + ADP + phosphate + 2 H(+). In terms of biological role, allows the formation of correctly charged Asn-tRNA(Asn) or Gln-tRNA(Gln) through the transamidation of misacylated Asp-tRNA(Asn) or Glu-tRNA(Gln) in organisms which lack either or both of asparaginyl-tRNA or glutaminyl-tRNA synthetases. The reaction takes place in the presence of glutamine and ATP through an activated phospho-Asp-tRNA(Asn) or phospho-Glu-tRNA(Gln). This is Aspartyl/glutamyl-tRNA(Asn/Gln) amidotransferase subunit B from Streptococcus pneumoniae (strain ATCC 700669 / Spain 23F-1).